The sequence spans 347 residues: Phosphate acyltransferase (347 aa).

This sequence belongs to the PlsX family. As to quaternary structure, homodimer. Probably interacts with PlsY.

The protein localises to the cytoplasm. The enzyme catalyses a fatty acyl-[ACP] + phosphate = an acyl phosphate + holo-[ACP]. It functions in the pathway lipid metabolism; phospholipid metabolism. Its function is as follows. Catalyzes the reversible formation of acyl-phosphate (acyl-PO(4)) from acyl-[acyl-carrier-protein] (acyl-ACP). This enzyme utilizes acyl-ACP as fatty acyl donor, but not acyl-CoA. The sequence is that of Phosphate acyltransferase from Sinorhizobium fredii (strain NBRC 101917 / NGR234).